The sequence spans 208 residues: Probable GTP-binding protein EngB (208 aa).

In terms of domain architecture, EngB-type G spans 29 to 203 (EGREVAFAGR…WDKLGEWLGI (175 aa)). GTP is bound by residues 37 to 44 (GRSNAGKS), 64 to 68 (GRTQL), 82 to 85 (DLPG), 149 to 152 (TKAD), and 182 to 184 (FSA). Residues Ser-44 and Thr-66 each contribute to the Mg(2+) site.

Belongs to the TRAFAC class TrmE-Era-EngA-EngB-Septin-like GTPase superfamily. EngB GTPase family. Requires Mg(2+) as cofactor.

Necessary for normal cell division and for the maintenance of normal septation. The polypeptide is Probable GTP-binding protein EngB (Alcanivorax borkumensis (strain ATCC 700651 / DSM 11573 / NCIMB 13689 / SK2)).